The primary structure comprises 766 residues: NADH-dependent flavin oxidoreductase iliE (766 aa).

Residues 1–13 are compositionally biased toward polar residues; it reads MSEQLGSHITTPS. The tract at residues 1–24 is disordered; sequence MSEQLGSHITTPSSHDDASKDKRP. Over residues 14–24 the composition is skewed to basic and acidic residues; sequence SHDDASKDKRP. N-linked (GlcNAc...) asparagine glycosylation is present at Asn-30. Residue 61–64 participates in FMN binding; the sequence is AATA. 2 N-linked (GlcNAc...) asparagine glycosylation sites follow: Asn-70 and Asn-136. An FMN-binding site is contributed by Gln-143. Residue 224 to 227 coordinates substrate; sequence HAGH. 385-386 is a binding site for FMN; sequence AR. The region spanning 551-622 is the J domain; the sequence is TPYDILAMRK…SKRSLYDTQG (72 aa). Residues Asn-634, Asn-650, and Asn-654 are each glycosylated (N-linked (GlcNAc...) asparagine). The helical transmembrane segment at 675–695 threads the bilayer; the sequence is MYMSNGVFATLVVMMCMIGAF.

It belongs to the NADH:flavin oxidoreductase/NADH oxidase family.

Its subcellular location is the membrane. In terms of biological role, NADH-dependent flavin oxidoreductase; part of the gene cluster that mediates the biosynthesis of ilicicolin H, a 4-hydroxy-2-pyridonealkaloid that has potent and broad antifungal activities by inhibiting the mitochondrial respiration chain. The biosynthesis of ilicicolin H starts with formation of the tetramic acid by the hybrid PKS-NRPS synthetase iliA with the partnering trans-enoyl reductase iliB since iliA lacks a designated enoylreductase (ER) domain. The cytochrome P450 monooxygenase iliC then catalyzes the ring expansion of the tetramate to the acyclic 2-pyridone. The pericyclase iliD further converts the acyclic 2-pyridone into 8-epi-ilicicolin H. 8-epi-ilicicolin H might then spontaneously convert to ilicicolin H since ilicicolin H is produced in the absence of the epimerase iliE, in contrast to what was observed for the Talaromyces variabilis ilicolin H biosynthetic pathway. This is NADH-dependent flavin oxidoreductase iliE from Neonectria sp. (strain DH2).